The primary structure comprises 183 residues: Large ribosomal subunit protein uL5 (183 aa).

Belongs to the universal ribosomal protein uL5 family. In terms of assembly, part of the 50S ribosomal subunit; part of the 5S rRNA/L5/L18/L25 subcomplex. Contacts the 5S rRNA and the P site tRNA. Forms a bridge to the 30S subunit in the 70S ribosome.

In terms of biological role, this is one of the proteins that bind and probably mediate the attachment of the 5S RNA into the large ribosomal subunit, where it forms part of the central protuberance. In the 70S ribosome it contacts protein S13 of the 30S subunit (bridge B1b), connecting the 2 subunits; this bridge is implicated in subunit movement. Contacts the P site tRNA; the 5S rRNA and some of its associated proteins might help stabilize positioning of ribosome-bound tRNAs. This Tropheryma whipplei (strain TW08/27) (Whipple's bacillus) protein is Large ribosomal subunit protein uL5.